Reading from the N-terminus, the 343-residue chain is MYNLARQLLFKLSPETSHDLSLDLIGAGGRLGLNGLLSKSPAKLPVSVMGLEFPNPVGLAAGLDKNGAAIDGFAQLGFGFVEIGTVTPRAQPGNPKPRIFRLPNAEAIINRMGFNNLGVDNLVSRVEAAKYRGVLGINIGKNFDTPVERAVDDYLICLDKVYAHASYVTVNVSSPNTPGLRSLQFGDSLKQLLQALSLRQQELTQRHGRRVPLAIKIAPDMTDEETVLVAAALIESGMDAVIATNTTLSRQGVEGLPHADQAGGLSGAPVREKSTHIVKVLAGELAGRLPIIAAGGITEGRHAAEKIAAGASLVQIYSGFIYKGPALIRESVDAIAAMPRAAR.

Residues 61–65 (AGLDK) and Thr85 contribute to the FMN site. Lys65 serves as a coordination point for substrate. A substrate-binding site is contributed by 110–114 (NRMGF). Residues Asn138 and Asn171 each contribute to the FMN site. Asn171 provides a ligand contact to substrate. Ser174 (nucleophile) is an active-site residue. Position 176 (Asn176) interacts with substrate. Lys216 and Thr244 together coordinate FMN. Substrate is bound at residue 245-246 (NT). FMN contacts are provided by residues Gly267, Gly296, and 317–318 (YS).

It belongs to the dihydroorotate dehydrogenase family. Type 2 subfamily. As to quaternary structure, monomer. FMN serves as cofactor.

The protein localises to the cell membrane. The catalysed reaction is (S)-dihydroorotate + a quinone = orotate + a quinol. It functions in the pathway pyrimidine metabolism; UMP biosynthesis via de novo pathway; orotate from (S)-dihydroorotate (quinone route): step 1/1. In terms of biological role, catalyzes the conversion of dihydroorotate to orotate with quinone as electron acceptor. This chain is Dihydroorotate dehydrogenase (quinone), found in Pseudomonas syringae pv. syringae (strain B728a).